The primary structure comprises 381 residues: Succinyl-diaminopimelate desuccinylase (381 aa).

H68 contacts Zn(2+). D70 is a catalytic residue. Residue D101 coordinates Zn(2+). E135 functions as the Proton acceptor in the catalytic mechanism. E136, E164, and H350 together coordinate Zn(2+).

Belongs to the peptidase M20A family. DapE subfamily. As to quaternary structure, homodimer. Zn(2+) is required as a cofactor. Requires Co(2+) as cofactor.

It carries out the reaction N-succinyl-(2S,6S)-2,6-diaminopimelate + H2O = (2S,6S)-2,6-diaminopimelate + succinate. Its pathway is amino-acid biosynthesis; L-lysine biosynthesis via DAP pathway; LL-2,6-diaminopimelate from (S)-tetrahydrodipicolinate (succinylase route): step 3/3. Functionally, catalyzes the hydrolysis of N-succinyl-L,L-diaminopimelic acid (SDAP), forming succinate and LL-2,6-diaminopimelate (DAP), an intermediate involved in the bacterial biosynthesis of lysine and meso-diaminopimelic acid, an essential component of bacterial cell walls. The polypeptide is Succinyl-diaminopimelate desuccinylase (Neisseria gonorrhoeae (strain NCCP11945)).